Reading from the N-terminus, the 28-residue chain is 50 kDa venom protease (28 aa).

It belongs to the venom metalloproteinase (M12B) family. It depends on Zn(2+) as a cofactor. As to expression, expressed by the venom gland.

Its subcellular location is the secreted. The protein is 50 kDa venom protease of Proatheris superciliaris (Lowland swamp viper).